Consider the following 59-residue polypeptide: MAKTIKVTQVRSSIARLPKHKATLRGLGLRHMHHTVELIDTPAVRGMINQVSYMVKVEE.

The protein belongs to the universal ribosomal protein uL30 family. Part of the 50S ribosomal subunit.

This chain is Large ribosomal subunit protein uL30, found in Haemophilus influenzae (strain 86-028NP).